The chain runs to 110 residues: Nucleoid-associated protein ESA_02800 (110 aa).

Positions 89–110 are disordered; sequence QKEKMASVSSGMQLPPGFKMPF.

The protein belongs to the YbaB/EbfC family. As to quaternary structure, homodimer.

It is found in the cytoplasm. It localises to the nucleoid. Its function is as follows. Binds to DNA and alters its conformation. May be involved in regulation of gene expression, nucleoid organization and DNA protection. In Cronobacter sakazakii (strain ATCC BAA-894) (Enterobacter sakazakii), this protein is Nucleoid-associated protein ESA_02800.